The primary structure comprises 282 residues: Non-selective voltage-gated ion channel VDAC2 (282 aa).

Ala-1 is subject to N-acetylalanine. Beta stranded transmembrane passes span 25-34 (LVKLDVKTKS), 38-46 (VEFTTSGTS), 53-63 (VNGSLETKYKW), 68-75 (LTFTEKWN), 79-88 (TLGTEIAIED), 94-103 (LKLTFDTTFS), 110-119 (SGKVKAAYKQ), 122-129 (VNLGCDVD), 136-144 (AIHGSAVVG), 149-157 (LAGYQMTFD), 162-174 (KLTKNNFAVGYKT), 177-184 (FQLHTNVN), 188-197 (EFAGSIYQKV), 201-210 (METAVNLAWT), 217-226 (RFGIAAKYQL), 230-237 (AAISAKVN), 241-250 (LVGVGYTQTL), 253-262 (GVKLTLSALV), and 272-281 (HKLGLGLELE). Residues 241-243 (LVG) and 259-263 (SALVD) each bind NAD(+).

It belongs to the eukaryotic mitochondrial porin family. Monomer, homodimer and higher order oligomers; formation of higher order structures is necessary for scramblase activity. Expressed in skeletal muscle and oocytes.

Its subcellular location is the mitochondrion outer membrane. The protein resides in the membrane. The catalysed reaction is chloride(in) = chloride(out). It catalyses the reaction K(+)(in) = K(+)(out). It carries out the reaction a 1,2-diacyl-sn-glycero-3-phospho-L-serine(in) = a 1,2-diacyl-sn-glycero-3-phospho-L-serine(out). The enzyme catalyses a 1,2-diacyl-sn-glycero-3-phosphocholine(in) = a 1,2-diacyl-sn-glycero-3-phosphocholine(out). The catalysed reaction is a 1,2-diacyl-sn-glycero-3-phospho-(1D-myo-inositol)(in) = a 1,2-diacyl-sn-glycero-3-phospho-(1D-myo-inositol)(out). Its function is as follows. Non-selective voltage-gated ion channel that mediates the transport of anions and cations through the mitochondrion outer membrane and plasma membrane. The channel adopts an open conformation at zero mV and a closed conformation at both positive and negative potentials. There are two populations of channels; the main that functions in a lower open-state conductance with lower ion selectivity, that switch, in a voltage-dependent manner, from the open to a low-conducting 'closed' state and the other that has a normal ion selectivity in the typical high conductance, 'open' state. Catalyzes the scrambling of phospholipids across the outer mitochondrial membrane; the mechanism is unrelated to channel activity and is capable of translocating both anionic and zwitterionic phospholipids. This chain is Non-selective voltage-gated ion channel VDAC2, found in Xenopus laevis (African clawed frog).